A 380-amino-acid polypeptide reads, in one-letter code: 1-deoxy-D-xylulose 5-phosphate reductoisomerase (380 aa).

8 residues coordinate NADPH: Ser10, Gly11, Ser12, Ile13, Gly36, Lys37, Asn38, and Asn120. Position 121 (Lys121) interacts with 1-deoxy-D-xylulose 5-phosphate. Glu122 lines the NADPH pocket. Asp146 serves as a coordination point for Mn(2+). Ser147, Glu148, Ser172, and His195 together coordinate 1-deoxy-D-xylulose 5-phosphate. Glu148 is a Mn(2+) binding site. Gly201 contacts NADPH. 1-deoxy-D-xylulose 5-phosphate is bound by residues Ser208, Asn213, Lys214, and Glu217. Glu217 provides a ligand contact to Mn(2+).

Belongs to the DXR family. The cofactor is Mg(2+). Requires Mn(2+) as cofactor.

It carries out the reaction 2-C-methyl-D-erythritol 4-phosphate + NADP(+) = 1-deoxy-D-xylulose 5-phosphate + NADPH + H(+). It functions in the pathway isoprenoid biosynthesis; isopentenyl diphosphate biosynthesis via DXP pathway; isopentenyl diphosphate from 1-deoxy-D-xylulose 5-phosphate: step 1/6. Its function is as follows. Catalyzes the NADPH-dependent rearrangement and reduction of 1-deoxy-D-xylulose-5-phosphate (DXP) to 2-C-methyl-D-erythritol 4-phosphate (MEP). This is 1-deoxy-D-xylulose 5-phosphate reductoisomerase from Bacillus cereus (strain Q1).